The primary structure comprises 182 residues: Probable tyrosine phosphatase protein H4 (182 aa).

The region spanning 1–182 (MEINKFICSQ…TVLKIQKSKI (182 aa)) is the Tyrosine-protein phosphatase domain. Cysteine 142 (phosphocysteine intermediate) is an active-site residue.

The protein belongs to the protein-tyrosine phosphatase family.

It carries out the reaction O-phospho-L-tyrosyl-[protein] + H2O = L-tyrosyl-[protein] + phosphate. In Microplitis demolitor (Parasitoid wasp), this protein is Probable tyrosine phosphatase protein H4 (H5).